Here is a 207-residue protein sequence, read N- to C-terminus: 8-oxoguanine DNA glycosylase/AP lyase (207 aa).

Catalysis depends on residues lysine 129 and aspartate 147.

Belongs to the type-2 OGG1 family.

It carries out the reaction 2'-deoxyribonucleotide-(2'-deoxyribose 5'-phosphate)-2'-deoxyribonucleotide-DNA = a 3'-end 2'-deoxyribonucleotide-(2,3-dehydro-2,3-deoxyribose 5'-phosphate)-DNA + a 5'-end 5'-phospho-2'-deoxyribonucleoside-DNA + H(+). Functionally, catalyzes the excision of an oxidatively damaged form of guanine (7,8-dihydro-8-oxoguanine = 8-oxoG) from DNA. Also cleaves the DNA backbone at apurinic/apyrimidinic sites (AP sites). The protein is 8-oxoguanine DNA glycosylase/AP lyase of Thermotoga sp. (strain RQ2).